The primary structure comprises 359 residues: Beta-hexosaminidase (359 aa).

Substrate contacts are provided by residues aspartate 64, arginine 72, arginine 138, and 168 to 169; that span reads KH. The active-site Proton donor/acceptor is histidine 181. The active-site Nucleophile is the aspartate 252.

It belongs to the glycosyl hydrolase 3 family. NagZ subfamily.

It localises to the cytoplasm. The enzyme catalyses Hydrolysis of terminal non-reducing N-acetyl-D-hexosamine residues in N-acetyl-beta-D-hexosaminides.. It participates in cell wall biogenesis; peptidoglycan recycling. In terms of biological role, plays a role in peptidoglycan recycling by cleaving the terminal beta-1,4-linked N-acetylglucosamine (GlcNAc) from peptide-linked peptidoglycan fragments, giving rise to free GlcNAc, anhydro-N-acetylmuramic acid and anhydro-N-acetylmuramic acid-linked peptides. The chain is Beta-hexosaminidase from Thiobacillus denitrificans (strain ATCC 25259 / T1).